Consider the following 403-residue polypeptide: Decapping and exoribonuclease protein 1 (403 aa).

Glu223 serves as a coordination point for a divalent metal cation. Residue Glu260 coordinates substrate. 3 residues coordinate a divalent metal cation: Asp262, Glu273, and Ile274. Substrate-binding residues include Lys275 and Gln297.

This sequence belongs to the DXO/Dom3Z family. It depends on a divalent metal cation as a cofactor.

It localises to the cytoplasm. The enzyme catalyses a 5'-end NAD(+)-phospho-ribonucleoside in mRNA + H2O = a 5'-end phospho-ribonucleoside in mRNA + NAD(+) + H(+). It catalyses the reaction a 5'-end (N(7)-methyl 5'-triphosphoguanosine)-ribonucleoside-ribonucleotide in mRNA + H2O = a (N(7)-methyl 5'-triphosphoguanosine)-nucleoside + a 5'-end phospho-ribonucleoside in mRNA + H(+). Functionally, decapping enzyme for NAD-capped RNAs: specifically hydrolyzes the nicotinamide adenine dinucleotide (NAD) cap from a subset of RNAs by removing the entire NAD moiety from the 5'-end of an NAD-capped RNA. The NAD-cap is present at the 5'-end of some RNAs and snoRNAs. In contrast to the canonical 5'-end N7 methylguanosine (m7G) cap, the NAD cap promotes mRNA decay. Also acts as a non-canonical decapping enzyme that removes the entire cap structure of m7G capped or incompletely capped RNAs and mediates their subsequent degradation. Has decapping and 5'-3' exonuclease activities. Has decapping activity toward incomplete 5'-end cap mRNAs such as unmethylated 5'-end-capped RNA to release GpppN and 5'-end monophosphate RNA. The 5'-end monophosphate RNA is then degraded by the 5'-3' exoribonuclease activity, enabling this enzyme to decap and degrade incompletely capped mRNAs. In Kluyveromyces lactis (strain ATCC 8585 / CBS 2359 / DSM 70799 / NBRC 1267 / NRRL Y-1140 / WM37) (Yeast), this protein is Decapping and exoribonuclease protein 1.